The sequence spans 240 residues: Urease accessory protein UreD (240 aa).

It belongs to the UreD family. In terms of assembly, ureD, UreF and UreG form a complex that acts as a GTP-hydrolysis-dependent molecular chaperone, activating the urease apoprotein by helping to assemble the nickel containing metallocenter of UreC. The UreE protein probably delivers the nickel.

The protein resides in the cytoplasm. Required for maturation of urease via the functional incorporation of the urease nickel metallocenter. The protein is Urease accessory protein UreD of Granulibacter bethesdensis (strain ATCC BAA-1260 / CGDNIH1).